The primary structure comprises 323 residues: Phosphomevalonate kinase (323 aa).

The protein belongs to the GHMP kinase family. In terms of assembly, homodimer. It depends on Mg(2+) as a cofactor.

The enzyme catalyses (R)-5-phosphomevalonate + ATP = (R)-5-diphosphomevalonate + ADP. Its pathway is isoprenoid biosynthesis; isopentenyl diphosphate biosynthesis via mevalonate pathway; isopentenyl diphosphate from (R)-mevalonate: step 2/3. Its function is as follows. Catalyzes the phosphorylation of (R)-mevalonate 5-phosphate (MVAP) to (R)-mevalonate 5-diphosphate (MVAPP). Functions in the mevalonate (MVA) pathway leading to isopentenyl diphosphate (IPP), a key precursor for the biosynthesis of isoprenoid compounds such as archaeal membrane lipids. In Saccharolobus solfataricus (strain ATCC 35092 / DSM 1617 / JCM 11322 / P2) (Sulfolobus solfataricus), this protein is Phosphomevalonate kinase.